A 1370-amino-acid polypeptide reads, in one-letter code: Major capsid protein (1370 aa).

The protein belongs to the herpesviridae major capsid protein family. As to quaternary structure, homomultimer. Makes the hexons and eleven out of twelve pentons. Interacts with triplex proteins 1/TRX1 and 2/TRX2; adjacent capsomers are linked together in groups of three by triplexes, heterotrimeric complexes composed of one molecule of TRX1 and two molecules of TRX2. Interacts with scaffold protein; this interaction allows efficient MCP transport to the host nucleus. Interacts with capsid vertex component 2/CVC2. Interacts with the small capsomere-interacting protein/SCP.

Its subcellular location is the virion. The protein resides in the host nucleus. Its function is as follows. Self-assembles to form an icosahedral capsid with a T=16 symmetry, about 200 nm in diameter, and consisting of 150 hexons and 12 pentons (total of 162 capsomers). Hexons form the edges and faces of the capsid and are each composed of six MCP molecules. In contrast, one penton is found at each of the 12 vertices. Eleven of the pentons are MCP pentamers, while the last vertex is occupied by the portal complex. The capsid is surrounded by a layer of proteinaceous material designated the tegument which, in turn, is enclosed in an envelope of host cell-derived lipids containing virus-encoded glycoproteins. This is Major capsid protein from Human cytomegalovirus (strain AD169) (HHV-5).